The following is a 136-amino-acid chain: T-cell receptor beta chain V region LB2 (136 aa).

The N-terminal stretch at 1-21 is a signal peptide; sequence MNKWVFCWVTLCLLTVETTHG. The v segment stretch occupies residues 22 to 116; it reads DGGIITQTPK…EMTVFLCASS (95 aa). Cysteine 45 and cysteine 113 are joined by a disulfide. The interval 117–120 is d segment; that stretch reads IRLA. Positions 121–136 are j segment; sequence SAETLYFGSGTRLTVL.

The protein is T-cell receptor beta chain V region LB2 of Mus musculus (Mouse).